The primary structure comprises 698 residues: Elongation factor G (698 aa).

Residues A10–L285 enclose the tr-type G domain. GTP is bound by residues A19–T26, D83–H87, and N137–D140.

The protein belongs to the TRAFAC class translation factor GTPase superfamily. Classic translation factor GTPase family. EF-G/EF-2 subfamily.

It is found in the cytoplasm. Catalyzes the GTP-dependent ribosomal translocation step during translation elongation. During this step, the ribosome changes from the pre-translocational (PRE) to the post-translocational (POST) state as the newly formed A-site-bound peptidyl-tRNA and P-site-bound deacylated tRNA move to the P and E sites, respectively. Catalyzes the coordinated movement of the two tRNA molecules, the mRNA and conformational changes in the ribosome. The protein is Elongation factor G of Frankia alni (strain DSM 45986 / CECT 9034 / ACN14a).